The sequence spans 353 residues: Photosystem II protein D1 (353 aa).

T2 carries the N-acetylthreonine modification. T2 carries the post-translational modification Phosphothreonine. 3 helical membrane-spanning segments follow: residues 29–46 (YIGWFGVLMIPTLLTATS), 118–133 (HFLLGVACYMGREWEL), and 142–156 (WIAVAYSAPVAAATA). H118 is a chlorophyll a binding site. Residue Y126 coordinates pheophytin a. Positions 170 and 189 each coordinate [CaMn4O5] cluster. Residues 197 to 218 (FHMLGVAGVFGGSLFSAMHGSL) traverse the membrane as a helical segment. H198 provides a ligand contact to chlorophyll a. Residues H215 and 264 to 265 (SF) each bind a quinone. H215 provides a ligand contact to Fe cation. Position 272 (H272) interacts with Fe cation. A helical membrane pass occupies residues 274–288 (FLAAWPVVGIWFTAL). Positions 332, 333, 342, and 344 each coordinate [CaMn4O5] cluster. The propeptide occupies 345 to 353 (AVEAPSTNG).

This sequence belongs to the reaction center PufL/M/PsbA/D family. PSII is composed of 1 copy each of membrane proteins PsbA, PsbB, PsbC, PsbD, PsbE, PsbF, PsbH, PsbI, PsbJ, PsbK, PsbL, PsbM, PsbT, PsbX, PsbY, PsbZ, Psb30/Ycf12, at least 3 peripheral proteins of the oxygen-evolving complex and a large number of cofactors. It forms dimeric complexes. Requires The D1/D2 heterodimer binds P680, chlorophylls that are the primary electron donor of PSII, and subsequent electron acceptors. It shares a non-heme iron and each subunit binds pheophytin, quinone, additional chlorophylls, carotenoids and lipids. D1 provides most of the ligands for the Mn4-Ca-O5 cluster of the oxygen-evolving complex (OEC). There is also a Cl(-1) ion associated with D1 and D2, which is required for oxygen evolution. The PSII complex binds additional chlorophylls, carotenoids and specific lipids. as cofactor. Tyr-161 forms a radical intermediate that is referred to as redox-active TyrZ, YZ or Y-Z. In terms of processing, C-terminally processed by CTPA; processing is essential to allow assembly of the oxygen-evolving complex and thus photosynthetic growth.

Its subcellular location is the plastid. It localises to the chloroplast thylakoid membrane. It carries out the reaction 2 a plastoquinone + 4 hnu + 2 H2O = 2 a plastoquinol + O2. Photosystem II (PSII) is a light-driven water:plastoquinone oxidoreductase that uses light energy to abstract electrons from H(2)O, generating O(2) and a proton gradient subsequently used for ATP formation. It consists of a core antenna complex that captures photons, and an electron transfer chain that converts photonic excitation into a charge separation. The D1/D2 (PsbA/PsbD) reaction center heterodimer binds P680, the primary electron donor of PSII as well as several subsequent electron acceptors. This chain is Photosystem II protein D1, found in Oenothera parviflora (Small-flowered evening primrose).